Consider the following 136-residue polypeptide: Large ribosomal subunit protein bL21 (136 aa).

The protein belongs to the bacterial ribosomal protein bL21 family. In terms of assembly, part of the 50S ribosomal subunit. Contacts protein L20.

This protein binds to 23S rRNA in the presence of protein L20. This Trichodesmium erythraeum (strain IMS101) protein is Large ribosomal subunit protein bL21.